We begin with the raw amino-acid sequence, 121 residues long: Small ribosomal subunit protein uS13 (121 aa).

The segment at 91-121 is disordered; the sequence is HRMSLPVRGQRTRTNARTRRGSRKTVAGRKK. The span at 100-121 shows a compositional bias: basic residues; that stretch reads QRTRTNARTRRGSRKTVAGRKK.

It belongs to the universal ribosomal protein uS13 family. In terms of assembly, part of the 30S ribosomal subunit. Forms a loose heterodimer with protein S19. Forms two bridges to the 50S subunit in the 70S ribosome.

Functionally, located at the top of the head of the 30S subunit, it contacts several helices of the 16S rRNA. In the 70S ribosome it contacts the 23S rRNA (bridge B1a) and protein L5 of the 50S subunit (bridge B1b), connecting the 2 subunits; these bridges are implicated in subunit movement. Contacts the tRNAs in the A and P-sites. The chain is Small ribosomal subunit protein uS13 from Prochlorococcus marinus (strain MIT 9301).